The chain runs to 460 residues: Bifunctional protein GlmU (460 aa).

Residues 1-229 are pyrophosphorylase; sequence MSNYAIILAA…FEESLGVNDR (229 aa). Residues 8-11, lysine 22, glutamine 72, and 77-78 each bind UDP-N-acetyl-alpha-D-glucosamine; these read LAAG and GT. Aspartate 102 lines the Mg(2+) pocket. The UDP-N-acetyl-alpha-D-glucosamine site is built by glycine 139, glutamate 154, asparagine 169, and asparagine 227. Asparagine 227 provides a ligand contact to Mg(2+). A linker region spans residues 230–250; that stretch reads VALATAEDVMRRRINKTHMIN. Positions 251–460 are N-acetyltransferase; that stretch reads GVTFQNPNAT…KKPHHPSQQK (210 aa). Positions 332 and 350 each coordinate UDP-N-acetyl-alpha-D-glucosamine. Catalysis depends on histidine 362, which acts as the Proton acceptor. UDP-N-acetyl-alpha-D-glucosamine-binding residues include tyrosine 365 and asparagine 376. Acetyl-CoA-binding positions include alanine 379, 385 to 386, serine 404, alanine 422, and arginine 439; that span reads NY.

The protein in the N-terminal section; belongs to the N-acetylglucosamine-1-phosphate uridyltransferase family. It in the C-terminal section; belongs to the transferase hexapeptide repeat family. Homotrimer. It depends on Mg(2+) as a cofactor.

Its subcellular location is the cytoplasm. The catalysed reaction is alpha-D-glucosamine 1-phosphate + acetyl-CoA = N-acetyl-alpha-D-glucosamine 1-phosphate + CoA + H(+). It catalyses the reaction N-acetyl-alpha-D-glucosamine 1-phosphate + UTP + H(+) = UDP-N-acetyl-alpha-D-glucosamine + diphosphate. It functions in the pathway nucleotide-sugar biosynthesis; UDP-N-acetyl-alpha-D-glucosamine biosynthesis; N-acetyl-alpha-D-glucosamine 1-phosphate from alpha-D-glucosamine 6-phosphate (route II): step 2/2. The protein operates within nucleotide-sugar biosynthesis; UDP-N-acetyl-alpha-D-glucosamine biosynthesis; UDP-N-acetyl-alpha-D-glucosamine from N-acetyl-alpha-D-glucosamine 1-phosphate: step 1/1. Its pathway is bacterial outer membrane biogenesis; LPS lipid A biosynthesis. In terms of biological role, catalyzes the last two sequential reactions in the de novo biosynthetic pathway for UDP-N-acetylglucosamine (UDP-GlcNAc). The C-terminal domain catalyzes the transfer of acetyl group from acetyl coenzyme A to glucosamine-1-phosphate (GlcN-1-P) to produce N-acetylglucosamine-1-phosphate (GlcNAc-1-P), which is converted into UDP-GlcNAc by the transfer of uridine 5-monophosphate (from uridine 5-triphosphate), a reaction catalyzed by the N-terminal domain. The protein is Bifunctional protein GlmU of Streptococcus thermophilus (strain ATCC BAA-491 / LMD-9).